We begin with the raw amino-acid sequence, 263 residues long: Tryptophan synthase alpha chain (263 aa).

Active-site proton acceptor residues include Glu49 and Asp60.

This sequence belongs to the TrpA family. In terms of assembly, tetramer of two alpha and two beta chains.

The catalysed reaction is (1S,2R)-1-C-(indol-3-yl)glycerol 3-phosphate + L-serine = D-glyceraldehyde 3-phosphate + L-tryptophan + H2O. It participates in amino-acid biosynthesis; L-tryptophan biosynthesis; L-tryptophan from chorismate: step 5/5. Its function is as follows. The alpha subunit is responsible for the aldol cleavage of indoleglycerol phosphate to indole and glyceraldehyde 3-phosphate. The polypeptide is Tryptophan synthase alpha chain (Cereibacter sphaeroides (strain ATCC 17029 / ATH 2.4.9) (Rhodobacter sphaeroides)).